The primary structure comprises 932 residues: Protocadherin gamma-A6 (932 aa).

The N-terminal stretch at 1-29 (MAPPQRHPQRSEQVLLLTLLGTLWGAAAA) is a signal peptide. 6 Cadherin domains span residues 30–133 (QIRY…TPRF), 134–242 (LKEE…TPVF), 243–347 (TQPV…VPEV), 348–452 (VVTS…PPTF), 453–562 (PHSS…APEI), and 570–682 (DGST…EPSA). Residues 30–692 (QIRYSIPEEL…KPNDSDLTLY (663 aa)) are Extracellular-facing. A glycan (N-linked (GlcNAc...) asparagine) is linked at asparagine 81. N-linked (GlcNAc...) asparagine glycosylation is found at asparagine 419 and asparagine 545. N-linked (GlcNAc...) asparagine glycosylation is present at asparagine 685. Residues 693–713 (LVVAVAAVSCVFLAFVIVLLA) traverse the membrane as a helical segment. Topologically, residues 714–932 (LRLQRWHKSR…KKKSGKKEKK (219 aa)) are cytoplasmic. Disordered stretches follow at residues 803–841 (DPRQ…WPNN) and 902–932 (ATLT…KEKK). Polar residues predominate over residues 806–841 (QLQQAPPNTDWRFSQAQRPGTSGSQNGDDTGTWPNN). The span at 922-932 (NKKKSGKKEKK) shows a compositional bias: basic residues.

It is found in the cell membrane. Its function is as follows. Potential calcium-dependent cell-adhesion protein. May be involved in the establishment and maintenance of specific neuronal connections in the brain. This is Protocadherin gamma-A6 (PCDHGA6) from Pan troglodytes (Chimpanzee).